The chain runs to 319 residues: Taste receptor type 2 member 30 (319 aa).

Met-1 is a topological domain (extracellular). Residues 2 to 22 (ITFLPIIFSILIVVIFVIGNF) form a helical membrane-spanning segment. Topologically, residues 23–46 (ANGFIALVNSIEWVKRQKISFVDQ) are cytoplasmic. The helical transmembrane segment at 47-67 (ILTALAVSRVGLLWVLLLHWY) threads the bilayer. Residues 68–86 (ATQLNPAFYSVEVRITVYN) are Extracellular-facing. The helical transmembrane segment at 87–107 (VWAVTNHFSSWLATSLSMFYL) threads the bilayer. Residues 108–126 (LKIANFSNLIFLRIKRRVK) lie on the Cytoplasmic side of the membrane. Residues 127–147 (SVVLVILLGPLLFLVCHLFVI) form a helical membrane-spanning segment. Residues 148-178 (NMDETIWTKEYEGNMTWKIKLRSAMYHSNMT) are Extracellular-facing. Asn-161 and Asn-176 each carry an N-linked (GlcNAc...) asparagine glycan. The helical transmembrane segment at 179 to 199 (LTMLANFVPLTLTLISFLLLI) threads the bilayer. The Cytoplasmic portion of the chain corresponds to 200–229 (CSLCKHLKKMQLHGKGSQDPSTKVHIKALQ). The helical transmembrane segment at 230 to 250 (TVTSFLLLCAIYFLSMIISVC) threads the bilayer. Residues 251-259 (NLGRLEKQP) lie on the Extracellular side of the membrane. Residues 260–280 (VFMFCQAIIFSYPSTHPFILI) form a helical membrane-spanning segment. At 281 to 319 (LGNKKLKQIFLSVLWHVRYWVKDRSLRLHRFTRAALCKG) the chain is on the cytoplasmic side.

It belongs to the G-protein coupled receptor T2R family.

Its subcellular location is the membrane. In terms of biological role, receptor that may play a role in the perception of bitterness and is gustducin-linked. May play a role in sensing the chemical composition of the gastrointestinal content. The activity of this receptor may stimulate alpha gustducin, mediate PLC-beta-2 activation and lead to the gating of TRPM5. This is Taste receptor type 2 member 30 (TAS2R30) from Pan troglodytes (Chimpanzee).